A 59-amino-acid chain; its full sequence is Conotoxin mr5a (59 aa).

An N-terminal signal peptide occupies residues 1–22 (MRCLPVFVILLLLIASAPSVDA). A propeptide spanning residues 23 to 48 (RPKTKDDMPLASFHDNAKRILQILQD) is cleaved from the precursor.

Contains 2 disulfide bonds that can be either 'C1-C3, C2-C4' or 'C1-C4, C2-C3', since these disulfide connectivities have been observed for conotoxins with cysteine framework V (for examples, see AC P0DQQ7 and AC P81755). As to expression, expressed by the venom duct.

The protein localises to the secreted. In Conus marmoreus (Marble cone), this protein is Conotoxin mr5a.